The sequence spans 632 residues: Protein NSP-INTERACTING KINASE 3 (632 aa).

The first 25 residues, 1 to 25, serve as a signal peptide directing secretion; sequence MEGVRFVVWRLGFLVFVWFFDISSA. The Extracellular portion of the chain corresponds to 26–238; that stretch reads TLSPTGVNYE…GTRTNGHHVA (213 aa). A glycan (N-linked (GlcNAc...) asparagine) is linked at Asn-96. LRR repeat units lie at residues 97–121, 122–145, 147–168, and 169–193; these read LTYLQSVVLQNNAITGPIPETIGRL, EKLQSLDLSNNSFTGEIPASLGEL, NLNYLRLNNNSLIGTCPESLSK, and IEGLTLVDISYNNLSGSLPKVSART. Residues Asn-131, Asn-155, Asn-181, and Asn-210 are each glycosylated (N-linked (GlcNAc...) asparagine). The chain crosses the membrane as a helical span at residues 239–259; it reads LAFAASFSAAFFVFFTSGMFL. Over 260–632 the chain is Cytoplasmic; it reads WWRYRRNKQI…VEAIELSGPR (373 aa). The residue at position 298 (Thr-298) is a Phosphothreonine. Residues 301–584 form the Protein kinase domain; the sequence is FNSKNILGRG…EGDGLAERWE (284 aa). 307–315 serves as a coordination point for ATP; sequence LGRGGYGIV. Thr-324 carries the phosphothreonine modification. Lys-329 contributes to the ATP binding site. Phosphoserine is present on residues Ser-382 and Ser-385. An interaction with geminivirus NSP protein region spans residues 415-495; that stretch reads YLHEQCDPKI…DVFGFGILLL (81 aa). The Proton acceptor role is filled by Asp-428. Phosphothreonine occurs at positions 461, 462, and 467. At Tyr-475 the chain carries Phosphotyrosine. Ser-477 carries the post-translational modification Phosphoserine. Thr-478 is modified (phosphothreonine). Ser-482 bears the Phosphoserine mark. Thr-557 is modified (phosphothreonine).

The protein belongs to the protein kinase superfamily. Ser/Thr protein kinase family. In terms of assembly, oligomer. Interacts with geminivirus nuclear shuttle protein (NSP). In terms of processing, autophosphorylated. In terms of tissue distribution, expressed in seedlings, leaves and flowers.

It is found in the cell membrane. The enzyme catalyses L-seryl-[protein] + ATP = O-phospho-L-seryl-[protein] + ADP + H(+). It catalyses the reaction L-threonyl-[protein] + ATP = O-phospho-L-threonyl-[protein] + ADP + H(+). With respect to regulation, inhibited by the viral nuclear shuttle protein (NSP) that binds to the region required for oligomerization. Its function is as follows. Involved in defense response to geminivirus infection. In Arabidopsis thaliana (Mouse-ear cress), this protein is Protein NSP-INTERACTING KINASE 3 (NIK3).